A 542-amino-acid polypeptide reads, in one-letter code: Calcium/calmodulin-dependent protein kinase type II subunit beta (542 aa).

Residues 14–272 enclose the Protein kinase domain; sequence YQLYEDIGKG…AHEALKHPWV (259 aa). Tyr-17 is modified (phosphotyrosine). ATP contacts are provided by residues 20–28 and Lys-43; that span reads IGKGAFSVV. Asp-136 (proton acceptor) is an active-site residue. The interval 283-292 is autoinhibitory domain; the sequence is HRQETVECLK. Thr-287 is subject to Phosphothreonine; by autocatalysis. The interval 291-301 is calmodulin-binding; it reads LKKFNARRKLK. Phosphothreonine; by autocatalysis is present on residues Thr-306 and Thr-307. The interval 349–376 is disordered; the sequence is ADGVKPQTNSTKNSSAITSPKGSLPPAA. The segment covering 354–369 has biased composition (polar residues); it reads PQTNSTKNSSAITSPK. Phosphoserine is present on residues Ser-367, Ser-371, Ser-394, and Ser-397. Phosphothreonine is present on residues Thr-400 and Thr-401.

Belongs to the protein kinase superfamily. CAMK Ser/Thr protein kinase family. CaMK subfamily. In terms of assembly, CAMK2 is composed of 4 different chains: alpha (CAMK2A), beta (CAMK2B), gamma (CAMK2G), and delta (CAMK2D). The different isoforms assemble into homo- or heteromultimeric holoenzymes composed of 12 subunits with two hexameric rings stacked one on top of the other. Interacts with SYNGAP1, CAMK2N2 and MPDZ. Interacts with FOXO3. Interacts (when in a kinase inactive state not associated with calmodulin) with ARC; leading to target ARC to inactive synapses. Interacts with CAMK2N1; this interaction requires CAMK2B activation by Ca(2+). In terms of processing, autophosphorylation of Thr-287 following activation by Ca(2+)/calmodulin. Phosphorylation of Thr-287 locks the kinase into an activated state.

It is found in the cytoplasm. The protein localises to the cytoskeleton. The protein resides in the microtubule organizing center. It localises to the centrosome. Its subcellular location is the sarcoplasmic reticulum membrane. It is found in the synapse. The catalysed reaction is L-seryl-[protein] + ATP = O-phospho-L-seryl-[protein] + ADP + H(+). It catalyses the reaction L-threonyl-[protein] + ATP = O-phospho-L-threonyl-[protein] + ADP + H(+). With respect to regulation, activated by Ca(2+)/calmodulin. Binding of calmodulin results in conformational change that relieves intrasteric autoinhibition and allows autophosphorylation of Thr-287 which turns the kinase in a constitutively active form and confers to the kinase a Ca(2+)-independent activity. Its function is as follows. Calcium/calmodulin-dependent protein kinase that functions autonomously after Ca(2+)/calmodulin-binding and autophosphorylation, and is involved in dendritic spine and synapse formation, neuronal plasticity and regulation of sarcoplasmic reticulum Ca(2+) transport in skeletal muscle. In neurons, plays an essential structural role in the reorganization of the actin cytoskeleton during plasticity by binding and bundling actin filaments in a kinase-independent manner. This structural function is required for correct targeting of CaMK2A, which acts downstream of NMDAR to promote dendritic spine and synapse formation and maintain synaptic plasticity which enables long-term potentiation (LTP) and hippocampus-dependent learning. In developing hippocampal neurons, promotes arborization of the dendritic tree and in mature neurons, promotes dendritic remodeling. Also regulates the migration of developing neurons. Participates in the modulation of skeletal muscle function in response to exercise. In slow-twitch muscles, is involved in regulation of sarcoplasmic reticulum (SR) Ca(2+) transport and in fast-twitch muscle participates in the control of Ca(2+) release from the SR through phosphorylation of triadin, a ryanodine receptor-coupling factor, and phospholamban (PLN/PLB), an endogenous inhibitor of SERCA2A/ATP2A2. In response to interferon-gamma (IFN-gamma) stimulation, catalyzes phosphorylation of STAT1, stimulating the JAK-STAT signaling pathway. Phosphorylates reticulophagy regulator RETREG1 at 'Thr-134' under endoplasmic reticulum stress conditions which enhances RETREG1 oligomerization and its membrane scission and reticulophagy activity. This chain is Calcium/calmodulin-dependent protein kinase type II subunit beta (Camk2b), found in Mus musculus (Mouse).